The chain runs to 131 residues: Ribonuclease P protein component (131 aa).

Belongs to the RnpA family. In terms of assembly, consists of a catalytic RNA component (M1 or rnpB) and a protein subunit.

The catalysed reaction is Endonucleolytic cleavage of RNA, removing 5'-extranucleotides from tRNA precursor.. Its function is as follows. RNaseP catalyzes the removal of the 5'-leader sequence from pre-tRNA to produce the mature 5'-terminus. It can also cleave other RNA substrates such as 4.5S RNA. The protein component plays an auxiliary but essential role in vivo by binding to the 5'-leader sequence and broadening the substrate specificity of the ribozyme. In Acinetobacter baylyi (strain ATCC 33305 / BD413 / ADP1), this protein is Ribonuclease P protein component.